Here is a 1627-residue protein sequence, read N- to C-terminus: Formin-like protein 5 (1627 aa).

The Phosphatase tensin-type domain occupies 5–194; that stretch reads RKFFLKKTPD…HYITRQGSGP (190 aa). The active-site Phosphocysteine intermediate is the Cys127. The C2 tensin-type domain occupies 200-337; the sequence is SRPLILDSIV…FRAEVVFSDP (138 aa). Disordered stretches follow at residues 370 to 413, 680 to 787, 801 to 1181, 1241 to 1261, and 1571 to 1627; these read EAEE…LEKH, TKRE…YDSS, KFNV…RGVV, AAVPKPNDSSKSDSRRKSLGS, and KQAE…KDVG. 4 stretches are compositionally biased toward basic and acidic residues: residues 402–413, 681–691, 700–717, and 726–742; these read VSREDSGSLEKH, KREESGGRRDV, IEARAKSPRISSDRRQIP, and MPVDHAPEAVLLEEKLG. Pro residues-rich tracts occupy residues 824–835, 852–870, 877–886, 897–908, 931–965, and 974–1168; these read APPPPPPPPPPY, QPPPPPPPPPLPPPPPPPA, IPPPPPPPPL, VPPPPPPPPPPR, ISPPPPPPPPPLKPSSGAPCPPPPPPPPPPPPPSA, and APPP…PPGG. Positions 1188–1588 constitute an FH2 domain; that stretch reads FGAAAARKST…RAEKEAEAEK (401 aa). 2 stretches are compositionally biased toward basic and acidic residues: residues 1248–1261 and 1571–1590; these read DSSKSDSRRKSLGS and KQAELDKKRAEKEAEAEKSK. Positions 1600-1611 are enriched in polar residues; that stretch reads KPSNPSRQVKQT. Basic and acidic residues predominate over residues 1612 to 1627; it reads PDTKTRAASRRGKDVG.

It belongs to the formin-like family. Class-II subfamily.

This is Formin-like protein 5 (FH5) from Oryza sativa subsp. japonica (Rice).